Here is a 519-residue protein sequence, read N- to C-terminus: MFDVDTVHNFFTSWYGILLAVLIGYHVFDYIRIQIVMKKLGCVSPPVESDGFFGFKLLYTSLKHKKEGTLVNFIKERFETVGKDTFSFRIAGTPVISTKNPENIKALLATQFSDFALGTRHAQFKPLLGDGIFTLDGSGWKHSRAMLRPQFAREQVAHVKSLEPHIQMLAKHVRRAKGGAFDVQSLFFRLTVDSATEFLFGESVESLQDESIGMAKDAVDFDGKAGFAEAFNTAQVYLSIRSLAQKAYFLVNNKEFRSSNEKVHKFADYYVQKALNSSPEELEKHSQDGYIFLYELVKQTRDPHVLRDQLLNILLAGRDTTAGLLSFTFYELARNPQVWSKLKEEIYEKFGKGDDARLEDITFESLKKCEYLKALLNEVLRLYPSVPQNFRVAQKDTSLPRGGGPNRDQPIFIAKGQTVTYTVYAMHRDEQFYGKDSEVFRPERWFEPETRKLGWAFLPFNGGPRICLGQQFALTEASYVIARLAQLFPNLASHDDEYPPRKASHLTMCHQSEVKISLA.

Cys467 lines the heme pocket.

The protein belongs to the cytochrome P450 family. It depends on heme as a cofactor.

It is found in the membrane. Together with an NADPH cytochrome P450 the enzyme system catalyzes the terminal hydroxylation as the first step in the assimilation of alkanes and fatty acids. The polypeptide is Cytochrome P450 52A12 (CYP52A12) (Debaryomyces hansenii (Yeast)).